Reading from the N-terminus, the 433-residue chain is Ribosome biogenesis protein WDR12 homolog (433 aa).

Methionine 1 bears the N-acetylmethionine mark. The interval leucine 12 to arginine 96 is ubiquitin-like (UBL) domain. WD repeat units lie at residues leucine 108–leucine 146, glycine 148–serine 191, glycine 203–glutamate 242, glycine 270–asparagine 308, phenylalanine 310–proline 350, serine 356–valine 396, and threonine 399–serine 433. The segment at threonine 238–glutamate 263 is disordered.

It belongs to the WD repeat WDR12/YTM1 family. In terms of assembly, interacts with PES. Interacts with BOP1.

It is found in the nucleus. The protein localises to the nucleolus. It localises to the nucleoplasm. Its function is as follows. Required for maturation of ribosomal RNAs and formation of the large ribosomal subunit. This is Ribosome biogenesis protein WDR12 homolog from Arabidopsis thaliana (Mouse-ear cress).